Consider the following 578-residue polypeptide: Peptidyl-prolyl cis-trans isomerase-like 2 (578 aa).

The U-box domain maps to 40 to 114 (RRLPFNFCAA…SDSLGAGLSD (75 aa)). Residues 240-260 (KAREQGGDVNRSSTALTKPTG) are disordered. One can recognise a PPIase cyclophilin-type domain in the interval 321–475 (ATGFARMETN…NKILIKDIVI (155 aa)). Positions 505–578 (GTDDDKTTWT…GGGFGNFDNW (74 aa)) are disordered. The span at 538 to 548 (KTTTQQSTPTV) shows a compositional bias: polar residues. Residues 551 to 560 (ADLEDVDTWE) show a composition bias toward acidic residues. Gly residues predominate over residues 569-578 (GGGFGNFDNW).

This sequence belongs to the cyclophilin-type PPIase family. PPIL2 subfamily.

It localises to the nucleus. The enzyme catalyses [protein]-peptidylproline (omega=180) = [protein]-peptidylproline (omega=0). The catalysed reaction is S-ubiquitinyl-[E2 ubiquitin-conjugating enzyme]-L-cysteine + [acceptor protein]-L-lysine = [E2 ubiquitin-conjugating enzyme]-L-cysteine + N(6)-ubiquitinyl-[acceptor protein]-L-lysine.. The protein operates within protein modification; protein ubiquitination. May catalyze the cis-trans isomerization of proline imidic peptide bonds in oligopeptides thereby assisting the folding of proteins. May also function as a chaperone, playing a role in intracellular transport of proteins. May also have a protein ubiquitin ligase activity acting as an E3 ubiquitin protein ligase or as a ubiquitin-ubiquitin ligase promoting elongation of ubiquitin chains on proteins. This chain is Peptidyl-prolyl cis-trans isomerase-like 2 (CYP8), found in Gibberella zeae (strain ATCC MYA-4620 / CBS 123657 / FGSC 9075 / NRRL 31084 / PH-1) (Wheat head blight fungus).